Consider the following 507-residue polypeptide: Zinc finger protein Aiolos (507 aa).

Residues 1 to 85 (MEDIQPTVEL…PMGDAEESEM (85 aa)) are disordered. Threonine 20 carries the post-translational modification Phosphothreonine. Residues serine 22 and serine 42 each carry the phosphoserine modification. Basic and acidic residues-rich tracts occupy residues 33-46 (KPHEIENVDSREAP) and 56-72 (DSMKVKDEYSDRDENIM). Residues lysine 61, lysine 73, and lysine 100 each participate in a glycyl lysine isopeptide (Lys-Gly) (interchain with G-Cter in SUMO2) cross-link. C2H2-type zinc fingers lie at residues 117 to 139 (MNCDVCGLSCISFNVLMVHKRSH), 145 to 167 (FQCNQCGASFTQKGNLLRHIKLH), and 173 to 195 (FKCHLCNYACQRRDALTGHLRTH). The segment at 201–223 (YKCEFCGRSYKQRSSLEEHKERC) adopts a C2H2-type 4; atypical zinc-finger fold. Lysine 244 is covalently cross-linked (Glycyl lysine isopeptide (Lys-Gly) (interchain with G-Cter in SUMO2)). Threonine 325 bears the Phosphothreonine mark. The segment at 370 to 396 (LPSERGLSPNNSAQDSTDTDSNHEDRQ) is disordered. Serine 377 carries the post-translational modification Phosphoserine. Residues 450 to 472 (FRCDHCHVLFLDYVMFTIHMGCH) form a C2H2-type 5 zinc finger. The segment at 450–502 (FRCDHCHVLFLDYVMFTIHMGCHGFRDPFECNMCGYRSHDRYEFSSHIARGEH) is mediates homodimerization and heterodimerization. The C2H2-type 6; atypical zinc finger occupies 478–502 (FECNMCGYRSHDRYEFSSHIARGEH).

It belongs to the Ikaros C2H2-type zinc-finger protein family. In terms of assembly, homodimer. Heterodimer with other IKAROS family members. Interacts with IKZF4 and IKZF5. Interacts with HRAS. Interacts with FOXP3; this interaction may be required for silencing target genes and regulating the suppressive activity of FOXP3-positive regulatory T-cells (Treg). Interacts with BCL21L isoform Bcl-X(L); this interaction blocks the anti-apoptotic role of BCL21L. Associates with histone deacetylase complexes containing HDAC1, MTA2 and SIN3A. Interacts with IKZF1. As to expression, expression is restricted to lymphoid tissues. Expressed at highest levels in spleen and at lower levels in the thymus and bone marrow. First detected in more committed lymphoid progenitors and strongly up-regulated as these differentiate into pre-T and pre-B cell precursors.

It is found in the nucleus. It localises to the cytoplasm. Transcription factor that plays an important role in the regulation of lymphocyte differentiation. Binds to GGGAA. Plays an essential role in regulation of B-cell differentiation, proliferation and maturation to an effector state. Involved in regulating BCL2 expression and controlling apoptosis in T-cells in an IL2-dependent manner. The polypeptide is Zinc finger protein Aiolos (Ikzf3) (Mus musculus (Mouse)).